Here is a 164-residue protein sequence, read N- to C-terminus: MVASRLAAGGLLLLALLALALDGKPAPPQPLRKAPAGGTTAWRRELTEQPEGASRPAAGGGGGGGRSGSKAANAAPTAPKSKGGAAAAAAAAARLMRDLRPDSKQARAAWGRMVHPEHHAGGGGGGGGGGGASRRLKGVAKKGLGKGCFGLKLDRIGSMSGLGC.

Positions 1–23 (MVASRLAAGGLLLLALLALALDG) are cleaved as a signal peptide. Disordered regions lie at residues 24 to 93 (KPAP…AAAA) and 115 to 134 (HPEHHAGGGGGGGGGGGASR). A propeptide spanning residues 24-142 (KPAPPQPLRK…SRRLKGVAKK (119 aa)) is cleaved from the precursor. The segment covering 58 to 67 (AGGGGGGGRS) has biased composition (gly residues). Low complexity predominate over residues 68 to 93 (GSKAANAAPTAPKSKGGAAAAAAAAA). Residues 121 to 132 (GGGGGGGGGGGA) are compositionally biased toward gly residues. The cysteines at positions 148 and 164 are disulfide-linked.

The protein belongs to the natriuretic peptide family. In terms of tissue distribution, expressed by the venom gland.

The protein localises to the secreted. Snake venom natriuretic peptide that has a vasorelaxant activity in rat aortic strips and a diuretic potency in anesthetized rats. May act by activating natriuretic receptors (NPR1 and/or NPR2). The protein is C-type natriuretic peptide of Philodryas olfersii (Green snake).